A 235-amino-acid chain; its full sequence is Tissue factor pathway inhibitor 2 (235 aa).

An N-terminal signal peptide occupies residues 1-22 (MDPARPLGLSILLLFLTEAALG). BPTI/Kunitz inhibitor domains lie at 36 to 86 (CLLP…DDAC), 96 to 149 (CRLQ…MGFC), and 158 to 208 (CYSP…KRAC). Cystine bridges form between Cys36–Cys86, Cys45–Cys69, Cys61–Cys82, Cys96–Cys149, Cys106–Cys130, Cys122–Cys145, Cys158–Cys208, Cys167–Cys191, and Cys183–Cys204. Asn116 is a glycosylation site (N-linked (GlcNAc...) asparagine). Asn170 carries an N-linked (GlcNAc...) asparagine glycan.

As to quaternary structure, finds in a complex with ABCB1, TFPI2 and PPP2R3C; leading to the dephosphorylation of ABCB1. In terms of tissue distribution, umbilical vein endothelial cells, liver, placenta, heart, pancreas, and maternal serum at advanced pregnancy.

The protein resides in the secreted. In terms of biological role, may play a role in the regulation of plasmin-mediated matrix remodeling. Inhibits trypsin, plasmin, factor VIIa/tissue factor and weakly factor Xa. Has no effect on thrombin. The chain is Tissue factor pathway inhibitor 2 (TFPI2) from Homo sapiens (Human).